Here is a 1141-residue protein sequence, read N- to C-terminus: DNA polymerase 120R (1141 aa).

The protein belongs to the DNA polymerase type-B family.

The catalysed reaction is DNA(n) + a 2'-deoxyribonucleoside 5'-triphosphate = DNA(n+1) + diphosphate. Its function is as follows. DNA-directed DNA polymerase involved in viral DNA replication. The protein is DNA polymerase 120R of Invertebrate iridescent virus 3 (IIV-3).